We begin with the raw amino-acid sequence, 671 residues long: MVTQLTKNAIDSLINSTNPDEQYVIQVLKAPQSVAENLFKICISDGFCKFKKGYFVSDAATKCQDLKDLCIIKCKKYIDDSNHDKERIIISNYELIYSNIQEQIGKPIEYKQYKSSGFSNPEGSTVIPSQYLSRNAQILQQNQVSQPKQMVTPPVSNINKPTPAVNNTFAQKPAVTNQNIQRVNQNPQQMNKTAPVKQNNNNNNNNNGNNKNNSSLQISTDGDEQNLEYIRNLQPNGQPQTIKVRITKKGDLKSFKEKQGKLFSIDVIDKFGDECSISFFNEIAEQYDGLFKVGQVIVLKQFSVKVNNNHQYNKGDHTVTVNKESKILICQEDPSIPMIKLNRQFIQDMQNKQKGDLIDLIVVVKADTEVKTMILKKDNQQQSKRDIISFDESLIETEITLWGETAKDYDAKQGDIIVFKDAKIGEFKDKKQINIGYGTQIFMNPDEQLFPQIHDVKKWYLSLNSDQLSTIQKAQGNDTGPREVTSFESSLNILKEEIKNLQTDPEMKIWKEIRGQIMYIKDTPLYYNACFSCKKKIARNNEVWTCINCNKDFNEPDSRYILSLNISDSTDTIWVSAFDEVGQKILGVKGDVFRYADEDTEHGTETKKKLLMAAQNKEYRFLLLTKQERDQNGNARDKTVIHAIKDFQPAYEAKKIINSLEKFMVIEENNP.

Disordered stretches follow at residues 143–166 (QVSQ…PAVN) and 190–219 (MNKT…LQIS). Over residues 199 to 213 (NNNNNNNNNGNNKNN) the composition is skewed to low complexity. A DNA-binding region (OB) is located at residues 240–322 (QTIKVRITKK…NKGDHTVTVN (83 aa)). The C4-type zinc-finger motif lies at 530 to 549 (CFSCKKKIARNNEVWTCINC).

The protein belongs to the replication factor A protein 1 family. Component of the replication protein A complex (RPA), a heterotrimeric complex composed of RPA1, RPA2/TEB2 and RPA3/TEB3.

Functionally, as part of the heterotrimeric replication protein A (RPA) complex, binds and stabilizes single-stranded DNA intermediates, that form during DNA replication or upon DNA stress. It prevents their reannealing and in parallel, recruits and activates different proteins and complexes involved in DNA metabolism. Thereby, it plays an essential role both in DNA replication and the cellular response to DNA damage. In the cellular response to DNA damage, the RPA complex controls DNA repair and DNA damage checkpoint activation. The protein is Replication protein A 70 kDa DNA-binding subunit of Tetrahymena thermophila (strain SB210).